The following is a 239-amino-acid chain: Purine nucleoside phosphorylase DeoD-type (239 aa).

His5 contacts a purine D-ribonucleoside. Residues Gly21, Arg25, Arg44, and 88–91 (RVGS) contribute to the phosphate site. A purine D-ribonucleoside-binding positions include 180 to 182 (EME) and 204 to 205 (SD). Asp205 serves as the catalytic Proton donor.

This sequence belongs to the PNP/UDP phosphorylase family. As to quaternary structure, homohexamer; trimer of homodimers.

It carries out the reaction a purine D-ribonucleoside + phosphate = a purine nucleobase + alpha-D-ribose 1-phosphate. The enzyme catalyses a purine 2'-deoxy-D-ribonucleoside + phosphate = a purine nucleobase + 2-deoxy-alpha-D-ribose 1-phosphate. Its function is as follows. Catalyzes the reversible phosphorolytic breakdown of the N-glycosidic bond in the beta-(deoxy)ribonucleoside molecules, with the formation of the corresponding free purine bases and pentose-1-phosphate. This is Purine nucleoside phosphorylase DeoD-type from Salmonella gallinarum (strain 287/91 / NCTC 13346).